An 886-amino-acid polypeptide reads, in one-letter code: UPF0592 membrane protein C7D4.03c (886 aa).

The interval Ile-87 to Ser-112 is disordered. The span at Ser-95–Ser-112 shows a compositional bias: low complexity. 3 helical membrane-spanning segments follow: residues Phe-277 to Leu-297, Gly-374 to Phe-394, and Val-400 to Ser-420.

It belongs to the UPF0592 family.

Its subcellular location is the membrane. This is UPF0592 membrane protein C7D4.03c from Schizosaccharomyces pombe (strain 972 / ATCC 24843) (Fission yeast).